The primary structure comprises 667 residues: DNA ligase (667 aa).

NAD(+)-binding positions include 32-36 (DSEYD), 81-82 (SL), and E110. The active-site N6-AMP-lysine intermediate is K112. NAD(+) is bound by residues R133, E167, K283, and K307. 4 residues coordinate Zn(2+): C401, C404, C419, and C424. The region spanning 586-667 (EGHPEFSGKT…FVDKQNELNS (82 aa)) is the BRCT domain.

It belongs to the NAD-dependent DNA ligase family. LigA subfamily. Mg(2+) serves as cofactor. Requires Mn(2+) as cofactor.

It carries out the reaction NAD(+) + (deoxyribonucleotide)n-3'-hydroxyl + 5'-phospho-(deoxyribonucleotide)m = (deoxyribonucleotide)n+m + AMP + beta-nicotinamide D-nucleotide.. Its function is as follows. DNA ligase that catalyzes the formation of phosphodiester linkages between 5'-phosphoryl and 3'-hydroxyl groups in double-stranded DNA using NAD as a coenzyme and as the energy source for the reaction. It is essential for DNA replication and repair of damaged DNA. The polypeptide is DNA ligase (Staphylococcus aureus (strain USA300)).